The chain runs to 914 residues: Neuropilin-1 (914 aa).

The first 18 residues, 1–18, serve as a signal peptide directing secretion; sequence MDWGLFLHCAALTFTLSR. Residues 20–847 are Extracellular-facing; that stretch reads LRSDKCGDTI…PGNVLKTLDP (828 aa). 3 disulfide bridges follow: Cys25–Cys52, Cys80–Cys102, and Cys145–Cys171. CUB domains follow at residues 25-139 and 145-263; these read CGDT…YEVF and CSRN…YSVS. The N-linked (GlcNAc...) asparagine glycan is linked to Asn148. Ca(2+) is bound by residues Glu193, Asp207, and Asp248. Cys204 and Cys226 are disulfide-bonded. Residue Asn259 is glycosylated (N-linked (GlcNAc...) asparagine). 2 cysteine pairs are disulfide-bonded: Cys273-Cys422 and Cys429-Cys581. 2 consecutive F5/8 type C domains span residues 273–422 and 429–581; these read CMEP…VYGC and CSGM…LLGC. Asn520 is a glycosylation site (N-linked (GlcNAc...) asparagine). Ser610 is a glycosylation site (O-linked (Xyl...) (chondroitin sulfate) serine; alternate). Ser610 carries O-linked (Xyl...) (heparan sulfate) serine; alternate glycosylation. Residues 636 to 801 form the MAM domain; it reads PYNLNCGFGW…NHISQEDCQK (166 aa). The segment at 809–829 is disordered; sequence IVEEDPESNQTGFTPSYRTDE. Over residues 816–825 the composition is skewed to polar residues; the sequence is SNQTGFTPSY. N-linked (GlcNAc...) asparagine glycosylation is present at Asn817. A helical membrane pass occupies residues 848–870; the sequence is ILITIIAMSALGVLLGAICGVVL. Residues 871 to 914 are Cytoplasmic-facing; sequence YCACWHNGMSERNLSALENYNFELVDGVKLKKDKLNTQNSYSEA.

This sequence belongs to the neuropilin family. In terms of assembly, homodimer, and heterodimer. In terms of tissue distribution, developing nervous system; optic tectum (layers D and E of SGFS), amacrine cells of retina, neurites of dorsal root ganglia. Also expressed in non-neuronal cells, e.g. blood vessels in the entire embryo.

It localises to the mitochondrion membrane. The protein resides in the cell membrane. Receptor involved in the development of the cardiovascular system, in angiogenesis, in the formation of certain neuronal circuits and in organogenesis outside the nervous system. Mediates the chemorepulsant activity of semaphorins. Binding to VEGFA initiates a signaling pathway needed for motor neuron axon guidance and cell body migration, including for the caudal migration of facial motor neurons from rhombomere 4 to rhombomere 6 during embryonic development. Regulates mitochondrial iron transport via interaction. The protein is Neuropilin-1 (NRP1) of Gallus gallus (Chicken).